Reading from the N-terminus, the 326-residue chain is Target of rapamycin complex subunit lst8 (326 aa).

WD repeat units lie at residues 1-37 (MNSN…CTRT), 40-80 (HQDS…PVIN), 83-122 (GVSK…LQCQ), 126-165 (QVNA…NEQL), 168-207 (ETDV…GEDL), 218-257 (AHKR…LMTE), and 268-309 (TSRG…REYS).

The protein belongs to the WD repeat LST8 family. Part of the mechanistic target of rapamycin complex 1 (mTORC1) which contains MTOR, MLST8 and RPTOR. Component of the mechanistic target of rapamycin complex 2 (mTORC2), consisting in two heterotretramers composed of MTOR, MLST8, RICTOR and MAPKAP1/SIN1.

Its subcellular location is the lysosome membrane. The protein localises to the cytoplasm. Functionally, subunit of both mTORC1 and mTORC2, which regulates cell growth and survival in response to nutrient and hormonal signals. mTORC1 is activated in response to growth factors or amino acids. In response to nutrients, mTORC1 is recruited to the lysosome membrane and promotes protein, lipid and nucleotide synthesis by phosphorylating several substrates, such as ribosomal protein S6 kinase (RPS6KB1 and RPS6KB2) and EIF4EBP1 (4E-BP1). In the same time, it inhibits catabolic pathways by phosphorylating the autophagy initiation components ULK1 and ATG13, as well as transcription factor TFEB, a master regulators of lysosomal biogenesis and autophagy. The mTORC1 complex is inhibited in response to starvation and amino acid depletion. Within mTORC1, MLST8 interacts directly with MTOR and enhances its kinase activity. In nutrient-poor conditions, stabilizes the MTOR-RPTOR interaction and favors RPTOR-mediated inhibition of MTOR activity. As part of the mTORC2 complex, transduces signals from growth factors to pathways involved in proliferation, cytoskeletal organization, lipogenesis and anabolic output. mTORC2 is also activated by growth factors, but seems to be nutrient-insensitive. In response to growth factors, mTORC2 phosphorylates and activates AGC protein kinase family members, including AKT (AKT1, AKT2 and AKT3), PKC (PRKCA, PRKCB and PRKCE) and SGK1. mTORC2 functions upstream of Rho GTPases to regulate the actin cytoskeleton, probably by activating one or more Rho-type guanine nucleotide exchange factors. mTORC2 promotes the serum-induced formation of stress-fibers or F-actin. Within mTORC2, MLST8 acts as a bridge between MAPKAP1/SIN1 and MTOR. The polypeptide is Target of rapamycin complex subunit lst8 (mlst8) (Xenopus tropicalis (Western clawed frog)).